Here is a 107-residue protein sequence, read N- to C-terminus: Large ribosomal subunit protein uL23 (107 aa).

It belongs to the universal ribosomal protein uL23 family. As to quaternary structure, part of the 50S ribosomal subunit. Contacts protein L29, and trigger factor when it is bound to the ribosome.

Functionally, one of the early assembly proteins it binds 23S rRNA. One of the proteins that surrounds the polypeptide exit tunnel on the outside of the ribosome. Forms the main docking site for trigger factor binding to the ribosome. This chain is Large ribosomal subunit protein uL23, found in Rhodopirellula baltica (strain DSM 10527 / NCIMB 13988 / SH1).